A 177-amino-acid chain; its full sequence is Large ribosomal subunit protein uL6 (177 aa).

The disordered stretch occupies residues 151 to 177 (KRPPEPYKGKGVKYADEHIRRKEGKKS). The span at 152 to 177 (RPPEPYKGKGVKYADEHIRRKEGKKS) shows a compositional bias: basic and acidic residues.

It belongs to the universal ribosomal protein uL6 family. In terms of assembly, part of the 50S ribosomal subunit.

Its function is as follows. This protein binds to the 23S rRNA, and is important in its secondary structure. It is located near the subunit interface in the base of the L7/L12 stalk, and near the tRNA binding site of the peptidyltransferase center. The protein is Large ribosomal subunit protein uL6 of Fusobacterium nucleatum subsp. nucleatum (strain ATCC 25586 / DSM 15643 / BCRC 10681 / CIP 101130 / JCM 8532 / KCTC 2640 / LMG 13131 / VPI 4355).